A 149-amino-acid chain; its full sequence is D-aminoacyl-tRNA deacylase (149 aa).

The short motif at 137–138 is the Gly-cisPro motif, important for rejection of L-amino acids element; it reads GP.

This sequence belongs to the DTD family. In terms of assembly, homodimer.

It is found in the cytoplasm. The catalysed reaction is glycyl-tRNA(Ala) + H2O = tRNA(Ala) + glycine + H(+). The enzyme catalyses a D-aminoacyl-tRNA + H2O = a tRNA + a D-alpha-amino acid + H(+). An aminoacyl-tRNA editing enzyme that deacylates mischarged D-aminoacyl-tRNAs. Also deacylates mischarged glycyl-tRNA(Ala), protecting cells against glycine mischarging by AlaRS. Acts via tRNA-based rather than protein-based catalysis; rejects L-amino acids rather than detecting D-amino acids in the active site. By recycling D-aminoacyl-tRNA to D-amino acids and free tRNA molecules, this enzyme counteracts the toxicity associated with the formation of D-aminoacyl-tRNA entities in vivo and helps enforce protein L-homochirality. The protein is D-aminoacyl-tRNA deacylase of Thioalkalivibrio sulfidiphilus (strain HL-EbGR7).